We begin with the raw amino-acid sequence, 1156 residues long: Nitric oxide synthase, inducible (1156 aa).

A DINNN-motif; mediates interaction with SPSB1, SPSB2 and SPSB4 motif is present at residues 23-27 (DINNN). The tract at residues 27–84 (NVGKFYQPPSSPVTQDDPKRHSPGKHGNESPQPLTGTVKTSPESLSKLDAPPSACPRH) is disordered. The segment covering 55–70 (ESPQPLTGTVKTSPES) has biased composition (polar residues). Zn(2+) contacts are provided by Cys-110 and Cys-115. Ser-118 provides a ligand contact to (6R)-L-erythro-5,6,7,8-tetrahydrobiopterin. Cys-200 contacts heme b. L-arginine contacts are provided by Gln-263, Trp-372, Tyr-373, and Glu-377. (6R)-L-erythro-5,6,7,8-tetrahydrobiopterin-binding residues include Arg-381, Ile-462, Trp-463, and Phe-476. Tyr-491 is a heme b binding site. Residues 515-535 (FKVLVKAVFFASVLMHKAMAS) are calmodulin-binding. Residues 539–677 (ATILFATETG…AFRSWAVQTF (139 aa)) form the Flavodoxin-like domain. The FMN site is built by Thr-545, Glu-546, Thr-547, Arg-549, and Ser-550. Tyr-575 is modified (phosphotyrosine). The FMN site is built by Ser-591, Thr-592, Ser-628, Cys-635, Glu-661, and Gln-665. The 241-residue stretch at 730–970 (KHVFTMRLKS…VRSASGFQLP (241 aa)) folds into the FAD-binding FR-type domain. NADP(+) is bound at residue Arg-750. 6 residues coordinate FAD: His-772, Arg-906, Tyr-908, Ser-909, Thr-924, and Ala-926. Thr-929 serves as a coordination point for NADP(+). FAD-binding residues include Tyr-930, Val-943, Cys-944, and Ser-945. 8 residues coordinate NADP(+): Thr-984, Arg-1017, Ser-1046, Arg-1047, Lys-1053, Tyr-1055, Gln-1057, and Asp-1090.

The protein belongs to the NOS family. As to quaternary structure, homodimer. Interacts with NHERF1. Interacts with GAPDH; induced by oxidatively-modified low-densitity lipoprotein (LDL(ox)). Interacts with S100A8 and S100A9 to form the iNOS-S100A8/9 transnitrosylase complex. Interacts with SPSB1, SPSB2 and SPSB4. Interacts with ELOC and CUL5 in the presence of SPSB1 or SPSB2 or SPSB4. Forms a complex with ASL, ASS1 and HSP90AA1; the complex regulates cell-autonomous L-arginine synthesis and citrulline recycling while channeling extracellular L-arginine to nitric oxide synthesis pathway. Requires heme b as cofactor. FAD is required as a cofactor. It depends on FMN as a cofactor. (6R)-L-erythro-5,6,7,8-tetrahydrobiopterin serves as cofactor. Polyubiquitinated; mediated by SPSB1, SPSB2 and SPSB4, leading to proteasomal degradation.

The protein localises to the cytoplasm. It localises to the cytosol. It carries out the reaction 2 L-arginine + 3 NADPH + 4 O2 + H(+) = 2 L-citrulline + 2 nitric oxide + 3 NADP(+) + 4 H2O. With respect to regulation, regulated by calcium/calmodulin. Produces nitric oxide (NO) which is a messenger molecule with diverse functions throughout the body. In macrophages, NO mediates tumoricidal and bactericidal actions. Also has nitrosylase activity and mediates cysteine S-nitrosylation of cytoplasmic target proteins such PTGS2/COX2. As component of the iNOS-S100A8/9 transnitrosylase complex involved in the selective inflammatory stimulus-dependent S-nitrosylation of GAPDH implicated in regulation of the GAIT complex activity and probably multiple targets including ANXA5, EZR, MSN and VIM. Involved in inflammation, enhances the synthesis of pro-inflammatory mediators such as IL6 and IL8. This is Nitric oxide synthase, inducible (NOS2) from Bos taurus (Bovine).